The primary structure comprises 261 residues: MGSSESAEARRVSFEMDEEERVRVLQGIRLSESVVNRMKDCSQPSAGEQLAPGPGPECSVPVPTVPQPTIPVLTVPSPSVCGPAEGTYKAPQGDFKVSRAENSDGQQSSAVKEDLKKFQQEQLAVQDELVKVARKEKEATEKHLKASLPKKKATHEQQQSDRLTRELKNREAELSRRDTFYKEQQERIQEKNAELYKLSSQQFHEAASKAESTIKPRRVEPVCSGLQAQILRCYRDHLHEVLLCSDLAKAYQHCVSTARKG.

Glycine 2 is lipidated: N-myristoyl glycine. Phosphoserine occurs at positions 13, 31, and 33. 3 disordered regions span residues 39-59 (KDCS…PECS), 81-114 (CGPA…VKED), and 140-165 (TEKH…RLTR). Positions 109–202 (SAVKEDLKKF…AELYKLSSQQ (94 aa)) form a coiled coil. Basic and acidic residues predominate over residues 154 to 165 (THEQQQSDRLTR). Residues 220-261 (EPVCSGLQAQILRCYRDHLHEVLLCSDLAKAYQHCVSTARKG) enclose the CHCH domain. 2 short sequence motifs (cx9C motif) span residues 223-233 (CSGLQAQILRC) and 244-254 (CSDLAKAYQHC). Cystine bridges form between cysteine 223–cysteine 254 and cysteine 233–cysteine 244.

This sequence belongs to the MICOS complex subunit Mic19 family. Metazoan Mic25 subfamily. As to quaternary structure, component of the mitochondrial contact site and cristae organizing system (MICOS) complex, composed of at least MICOS10/MIC10, CHCHD3/MIC19, CHCHD6/MIC25, APOOL/MIC27, IMMT/MIC60, APOO/MIC23/MIC26 and MICOS13/MIC13. This complex was also known under the names MINOS or MitOS complex. The MICOS complex associates with mitochondrial outer membrane proteins SAMM50, MTX1 and MTX2 (together described as components of the mitochondrial outer membrane sorting assembly machinery (SAM) complex) and DNAJC11, mitochondrial inner membrane protein TMEM11 and with HSPA9. The MICOS and SAM complexes together with DNAJC11 are part of a large protein complex spanning both membranes termed the mitochondrial intermembrane space bridging (MIB) complex. Interacts with DISC1. Interacts with IMMT/MIC60.

The protein localises to the mitochondrion inner membrane. It is found in the mitochondrion. In terms of biological role, component of the MICOS complex, a large protein complex of the mitochondrial inner membrane that plays crucial roles in the maintenance of crista junctions, inner membrane architecture, and formation of contact sites to the outer membrane. In Rattus norvegicus (Rat), this protein is MICOS complex subunit Mic25 (Chchd6).